We begin with the raw amino-acid sequence, 58 residues long: Birtoxin (58 aa).

Residues 3 to 58 (VPGNYPLDKDGNTYKCFLLGGNEECLNVCKLHGVQYGYCYASKCWCEYLEDDKDSV) enclose the LCN-type CS-alpha/beta domain. Disulfide bonds link cysteine 18–cysteine 41, cysteine 27–cysteine 46, and cysteine 31–cysteine 48.

As to expression, expressed by the venom gland.

It is found in the secreted. Its function is as follows. Beta toxins bind voltage-independently at site-4 of sodium channels (Nav) and shift the voltage of activation toward more negative potentials thereby affecting sodium channel activation and promoting spontaneous and repetitive firing. Moderately toxic, but very high abundant. Does not target reptilian channels. Does not produce effect when administered to blowfly and cabbage looper larvae. In mice, produces convulsions, tremors, increased ventilation and, subsequently, death. The protein is Birtoxin of Parabuthus transvaalicus (Transvaal thick-tailed scorpion).